Consider the following 330-residue polypeptide: Aspartate--ammonia ligase (330 aa).

It belongs to the class-II aminoacyl-tRNA synthetase family. AsnA subfamily.

It is found in the cytoplasm. The catalysed reaction is L-aspartate + NH4(+) + ATP = L-asparagine + AMP + diphosphate + H(+). It participates in amino-acid biosynthesis; L-asparagine biosynthesis; L-asparagine from L-aspartate (ammonia route): step 1/1. The sequence is that of Aspartate--ammonia ligase from Aeromonas salmonicida (strain A449).